We begin with the raw amino-acid sequence, 404 residues long: Double-stranded RNA-binding protein 5 (404 aa).

2 DRBM domains span residues Met-1–Leu-70 and Val-87–Gln-155. 3 disordered regions span residues Arg-195–Glu-236, Gly-263–Ala-320, and Arg-336–Pro-362. Over residues Gly-263–Ser-280 the composition is skewed to low complexity. Over residues Ala-302 to Gly-316 the composition is skewed to basic residues.

In terms of biological role, binds double-stranded RNA. In Oryza sativa subsp. japonica (Rice), this protein is Double-stranded RNA-binding protein 5 (DRB5).